The sequence spans 313 residues: UPF0252 protein AF_0384 (313 aa).

It belongs to the UPF0252 family.

In Archaeoglobus fulgidus (strain ATCC 49558 / DSM 4304 / JCM 9628 / NBRC 100126 / VC-16), this protein is UPF0252 protein AF_0384.